Here is a 236-residue protein sequence, read N- to C-terminus: CDP-diacylglycerol--glycerol-3-phosphate 3-phosphatidyltransferase (236 aa).

5 helical membrane-spanning segments follow: residues 39 to 59 (IFIA…GVLA), 66 to 86 (ISIS…TAVI), 120 to 140 (VLIA…VFIV), 163 to 183 (WLGK…CFVW), and 196 to 216 (GLFF…FSIW).

This sequence belongs to the CDP-alcohol phosphatidyltransferase class-I family.

The protein localises to the cell membrane. It catalyses the reaction a CDP-1,2-diacyl-sn-glycerol + sn-glycerol 3-phosphate = a 1,2-diacyl-sn-glycero-3-phospho-(1'-sn-glycero-3'-phosphate) + CMP + H(+). It participates in phospholipid metabolism; phosphatidylglycerol biosynthesis; phosphatidylglycerol from CDP-diacylglycerol: step 1/2. Functionally, this protein catalyzes the committed step to the synthesis of the acidic phospholipids. This Mycoplasma genitalium (strain ATCC 33530 / DSM 19775 / NCTC 10195 / G37) (Mycoplasmoides genitalium) protein is CDP-diacylglycerol--glycerol-3-phosphate 3-phosphatidyltransferase (pgsA).